Here is a 425-residue protein sequence, read N- to C-terminus: Polyribonucleotide 5'-hydroxyl-kinase Clp1 (425 aa).

Residues Glu-22, Lys-62, and 124 to 129 (DVGKST) each bind ATP.

Belongs to the Clp1 family. Clp1 subfamily. Component of the tRNA splicing endonuclease complex, composed of CLP1, TSEN2, TSEN15, TSEN34 and TSEN54. Component of pre-mRNA cleavage complex II (CF-II). Also associates with numerous components of the pre-mRNA cleavage complex I (CF-I/CFIm), including NUDT21, CPSF2, CPSF3, CPSF6 and CPSF7. Interacts with CSTF2 and SYMPK. Requires Mg(2+) as cofactor. It depends on Mn(2+) as a cofactor. The cofactor is Ni(2+).

The protein resides in the nucleus. It catalyses the reaction a 5'-end dephospho-2'-deoxyribonucleoside-DNA + ATP = a 5'-end 5'-phospho-2'-deoxyribonucleoside-DNA + ADP + H(+). The catalysed reaction is a 5'-end dephospho-ribonucleoside-RNA + ATP = a 5'-end 5'-phospho-ribonucleoside-RNA + ADP + H(+). In terms of biological role, polynucleotide kinase that can phosphorylate the 5'-hydroxyl groups of double-stranded RNA (dsRNA), single-stranded RNA (ssRNA), double-stranded DNA (dsDNA) and double-stranded DNA:RNA hybrids. dsRNA is phosphorylated more efficiently than dsDNA, and the RNA component of a DNA:RNA hybrid is phosphorylated more efficiently than the DNA component. Plays a key role in both tRNA splicing and mRNA 3'-end formation. Component of the tRNA splicing endonuclease complex: phosphorylates the 5'-terminus of the tRNA 3'-exon during tRNA splicing; this phosphorylation event is a prerequisite for the subsequent ligation of the two exon halves and the production of a mature tRNA. Its role in tRNA splicing and maturation is required for cerebellar development. Component of the pre-mRNA cleavage complex II (CF-II), which seems to be required for mRNA 3'-end formation. Also phosphorylates the 5'-terminus of exogenously introduced short interfering RNAs (siRNAs), which is a necessary prerequisite for their incorporation into the RNA-induced silencing complex (RISC). However, endogenous siRNAs and microRNAs (miRNAs) that are produced by the cleavage of dsRNA precursors by DICER1 already contain a 5'-phosphate group, so this protein may be dispensible for normal RNA-mediated gene silencing. The chain is Polyribonucleotide 5'-hydroxyl-kinase Clp1 from Homo sapiens (Human).